We begin with the raw amino-acid sequence, 248 residues long: tRNA (guanine-N(1)-)-methyltransferase (248 aa).

S-adenosyl-L-methionine-binding positions include glycine 113 and isoleucine 133–leucine 138.

This sequence belongs to the RNA methyltransferase TrmD family. In terms of assembly, homodimer.

Its subcellular location is the cytoplasm. It carries out the reaction guanosine(37) in tRNA + S-adenosyl-L-methionine = N(1)-methylguanosine(37) in tRNA + S-adenosyl-L-homocysteine + H(+). In terms of biological role, specifically methylates guanosine-37 in various tRNAs. The polypeptide is tRNA (guanine-N(1)-)-methyltransferase (Dehalococcoides mccartyi (strain ATCC BAA-2266 / KCTC 15142 / 195) (Dehalococcoides ethenogenes (strain 195))).